Consider the following 423-residue polypeptide: MQKAGAGGRRASDCGLAPHRPRCITKFAQYVGSFPVDDLDTQESVWLVQQQLWALKDCPRRRAVILKFSLQGLKIYSGEGEVLLMAHALRRILYSTWCPADCQFAFMARNPRSPASKLFCHLFVGSQPGEVQILHLLLCRSFQLAYLLQHPEERAQPEPCPGPTGEVPLKPLSSSGGLVREPFGRDQLSQNVHALVSFRRLPAEGLVGSGKELPESEGRARHARLGNPYCSPTLVRKKAIRSKVIRSGAYRGCTYETQLQLSAREAFPAAWEAWPRGPGGHSCLVESEGSLTENIWAFAGISRPCALALLRRDVLGAFLLWPELGASGQWCLSVRTQCGVVPHQVFRNHLGRYCLEHLPAEFPSLEALVENHAVTERSLFCPLDMGRLNPTYEEQDCGPPGRPPRTLRPLSHAKSEAELQGLG.

The 119-residue stretch at 28 to 146 folds into the PID domain; that stretch reads AQYVGSFPVD…LLCRSFQLAY (119 aa). The SH2 domain occupies 296–392; that stretch reads WAFAGISRPC…LDMGRLNPTY (97 aa). Residues 392–423 are disordered; sequence YEEQDCGPPGRPPRTLRPLSHAKSEAELQGLG.

As to quaternary structure, interacts with BCR.

It is found in the postsynaptic density. In terms of biological role, may be involved in synaptic plasticity regulation through the control of Rac-GTP levels. In Homo sapiens (Human), this protein is SH2 domain-containing protein 5.